We begin with the raw amino-acid sequence, 222 residues long: GTP cyclohydrolase 1 (222 aa).

Zn(2+) is bound by residues Cys-111, His-114, and Cys-182.

The protein belongs to the GTP cyclohydrolase I family. In terms of assembly, homomer.

The enzyme catalyses GTP + H2O = 7,8-dihydroneopterin 3'-triphosphate + formate + H(+). Its pathway is cofactor biosynthesis; 7,8-dihydroneopterin triphosphate biosynthesis; 7,8-dihydroneopterin triphosphate from GTP: step 1/1. In Klebsiella pneumoniae (strain 342), this protein is GTP cyclohydrolase 1.